We begin with the raw amino-acid sequence, 134 residues long: Large ribosomal subunit protein uL16 (134 aa).

Over residues 1–20 the composition is skewed to basic residues; sequence MLLQPKRTKFRKMHKGRNRG. Positions 1–21 are disordered; sequence MLLQPKRTKFRKMHKGRNRGT.

Belongs to the universal ribosomal protein uL16 family. As to quaternary structure, part of the 50S ribosomal subunit.

Its function is as follows. Binds 23S rRNA and is also seen to make contacts with the A and possibly P site tRNAs. The sequence is that of Large ribosomal subunit protein uL16 from Blochmanniella pennsylvanica (strain BPEN).